The chain runs to 308 residues: Nodulation protein D 1 (308 aa).

The HTH lysR-type domain maps to 6–63 (LDLNLLVALDALMTERKLTAAARRINLSQPAMSAAIARLRTYFGDELFSMQGRELIPT). Positions 23-42 (LTAAARRINLSQPAMSAAIA) form a DNA-binding region, H-T-H motif.

The protein belongs to the LysR transcriptional regulatory family.

Functionally, nodD regulates the expression of the nodABCFE genes which encode other nodulation proteins. NodD is also a negative regulator of its own expression. Binds flavonoids as inducers. This is Nodulation protein D 1 (nodD1) from Rhizobium meliloti (strain 1021) (Ensifer meliloti).